An 853-amino-acid chain; its full sequence is MATWTQNEPTGVTKRRRWNLEDRASLNKLKHHIAEEGCPQMQYDLAKELLDNSIVEPNLAKGNQSQKAVNWLVSAAHNGHEDAVKLLRQCYNDGSGITAENTDEVRRCLAMTPGERAARKAARELFACLSNGNEHITPKQLERKMRRIYNLQRKRRRRDDDRSSSSSEGEQEPECEPLEDVPTIDLANVERRRLITEAHLVSAASNYSAGQMPSVNDALTLSVPDPRSLDHVPCFYRMIFHPLIFFTLFYHRLLNLIVSIPNVIPLSVRCSVLVAISWWSSRHMLPLVSYYLSLGIMIWATCKMLKTKQQFVDFRIWSGLFLSYGDQNIEADIAEHRFLRNNMKPYLYFFCAFICNLIVYPLVTDAWLPHSELTIISGALTFITMCVSMYASSHQLPDWLVIVSFAVNVLAKYPYEMDEVVSTRWRFLDLRVPTFSSFVIGNGIEFCLNCRTALYLFIPVLLIMMAKRSRWHGVYTFLIPHCVTLSWLQVCIATSQSSTVFGVMRAALGLAGIVLFLPLFGIVALLVPVFVAIDSLGLASEQLRWGSTALACGLVVVLSCILALNRATQKYITMLQLITAITTACLLVLPYMTSSFKDTPRFNAMPRAGLHSLSETNTLPWDRFHALCAQPVHEQPNKIKAQLRCSLLNGMPVIWEGSVTKVEISRVSNFLEDTIANYLPVWLGRMLRCLHGENISQHFKCDPKLDAQCEEWRSVFKTFNAQSGSCTLQRWNRYEYELLVKVGTKRSGRLLGRSTTTDVILRAHHDFGNFTRLLSEGDVVLFYGILHNSRLLADNVQVKLKTIECVECRSRDLGTASIERVVAASPMDARLQDLMRGIKYLLNALLNPLITFK.

The tract at residues 139–179 (KQLERKMRRIYNLQRKRRRRDDDRSSSSSEGEQEPECEPLE) is disordered. The segment covering 144 to 157 (KMRRIYNLQRKRRR) has biased composition (basic residues). A compositionally biased stretch (acidic residues) spans 169–179 (GEQEPECEPLE). A run of 10 helical transmembrane segments spans residues 238–258 (MIFH…NLIV), 259–279 (SIPN…ISWW), 285–305 (LPLV…CKML), 347–367 (LYFF…TDAW), 373–393 (LTII…YASS), 446–466 (FCLN…IMMA), 473–493 (GVYT…VCIA), 513–533 (IVLF…FVAI), 545–565 (WGST…LALN), and 572–592 (ITML…LPYM). Residues asparagine 694 and asparagine 769 are each glycosylated (N-linked (GlcNAc...) asparagine).

Detected in adult brain.

The protein localises to the membrane. It localises to the endoplasmic reticulum. It is found in the mitochondrion. Participates in the regulation of cellular Ca(2+) homeostasis, at least partly, by modulating the filling state of the endoplasmic reticulum Ca(2+) store. In neurons and glial cells, has a role in maintaining neuronal function and integrity during aging. This is Wolframin from Drosophila melanogaster (Fruit fly).